Here is a 134-residue protein sequence, read N- to C-terminus: Cytochrome b (134 aa).

The next 3 membrane-spanning stretches (helical) occupy residues 33-53 (FGSL…FLAM), 77-98 (WLIR…FLHV), and 113-133 (WNMG…GYVL). His-83 and His-97 together coordinate heme b.

Belongs to the cytochrome b family. As to quaternary structure, the cytochrome bc1 complex contains 11 subunits: 3 respiratory subunits (MT-CYB, CYC1 and UQCRFS1), 2 core proteins (UQCRC1 and UQCRC2) and 6 low-molecular weight proteins (UQCRH/QCR6, UQCRB/QCR7, UQCRQ/QCR8, UQCR10/QCR9, UQCR11/QCR10 and a cleavage product of UQCRFS1). This cytochrome bc1 complex then forms a dimer. Requires heme b as cofactor.

The protein localises to the mitochondrion inner membrane. Its function is as follows. Component of the ubiquinol-cytochrome c reductase complex (complex III or cytochrome b-c1 complex) that is part of the mitochondrial respiratory chain. The b-c1 complex mediates electron transfer from ubiquinol to cytochrome c. Contributes to the generation of a proton gradient across the mitochondrial membrane that is then used for ATP synthesis. The polypeptide is Cytochrome b (MT-CYB) (Microtus subterraneus (European pine vole)).